A 2959-amino-acid chain; its full sequence is uncharacterized protein (2959 aa).

It is found in the virion. This is an uncharacterized protein from Acanthamoeba polyphaga mimivirus (APMV).